A 156-amino-acid polypeptide reads, in one-letter code: Protein E6 (156 aa).

2 zinc fingers span residues 40-76 (CNFC…CRLC) and 113-149 (CHTC…CRQC).

Belongs to the papillomaviridae E6 protein family. In terms of assembly, forms homodimers. Interacts with ubiquitin-protein ligase UBE3A/E6-AP; this interaction stimulates UBE3A ubiquitin activity. Interacts with host BAK1.

The protein resides in the host cytoplasm. Its subcellular location is the host nucleus. Plays a major role in the induction and maintenance of cellular transformation. E6 associates with host UBE3A/E6-AP ubiquitin-protein ligase and modulates its activity. Protects host keratinocytes from apoptosis by mediating the degradation of host BAK1. May also inhibit host immune response. The polypeptide is Protein E6 (Homo sapiens (Human)).